The primary structure comprises 198 residues: Putative pseudouridine methyltransferase (198 aa).

The S-adenosyl-L-methionine site is built by leucine 132 and cysteine 186.

Belongs to the methyltransferase superfamily. TrmY family.

Its subcellular location is the cytoplasm. The sequence is that of Putative pseudouridine methyltransferase from Shewanella frigidimarina (strain NCIMB 400).